The sequence spans 1049 residues: RTX-III toxin determinant A from serotype 2 (1049 aa).

3 helical membrane-spanning segments follow: residues Thr-154 to Ile-170, Ala-315 to Leu-331, and Leu-397 to Ile-413. Hemolysin-type calcium-binding repeat units lie at residues Lys-743–Leu-760, Asn-761–Leu-778, Arg-779–Leu-796, Leu-797–Leu-814, Arg-825–Leu-842, and Asp-843–Tyr-860.

It belongs to the RTX prokaryotic toxin (TC 1.C.11) family. Palmitoylated by ApxIIIC. The toxin only becomes active when modified.

The protein localises to the secreted. The protein resides in the host cell membrane. In terms of biological role, does not have hemolytic activity but shows a strong cytotoxicity towards alveolar macrophages and neutrophils. The sequence is that of RTX-III toxin determinant A from serotype 2 (apxIIIA) from Actinobacillus pleuropneumoniae (Haemophilus pleuropneumoniae).